Consider the following 2635-residue polypeptide: Protein unc-79 homolog (2635 aa).

Residues Ser754 and Ser758 each carry the phosphoserine modification. Disordered regions lie at residues 907–929 (GPEGEEEENPASKHGENPGNCTE), 1538–1575 (IAQRPNDPGRSRQNSATRPDNSEIPENPAMEGFPDARR), 1607–1678 (LIDL…SVLS), 1693–1832 (SKDF…FKIQ), 1863–1909 (LGEQ…TQYR), and 1929–1950 (LEHQSSAPHNISNWDTEQIQPG). Positions 1666–1678 (SSPSVPSHPSVLS) are enriched in low complexity. Residues 1699-1713 (KDSGNNQSAGNTDSA) are compositionally biased toward polar residues. Basic and acidic residues predominate over residues 1761–1775 (LDDHPDPGTEGEKPG). Composition is skewed to polar residues over residues 1897–1909 (ETSSHSSISTQYR) and 1929–1947 (LEHQSSAPHNISNWDTEQI). 2 helical membrane passes run 2223 to 2243 (LLSFVIQNAVFTLAYLVELCG) and 2466 to 2486 (VLHMCSLFHAFIFAQLWTVYC).

This sequence belongs to the unc-79 family. In terms of assembly, NALCN complex consists of NALCN and auxiliary subunits, UNC79, UNC80 and NACL1. These auxiliary subunits are essential for the NALCN channel function. UNC80 bridges NALCN to UNC79.

The protein resides in the cell membrane. Its function is as follows. Auxiliary subunit of the NALCN sodium channel complex, a voltage-gated ion channel responsible for the resting Na(+) permeability that controls neuronal excitability. Activated by neuropeptides substance P, neurotensin, and extracellular calcium that regulates neuronal excitability by controlling the sizes of NALCN-dependent sodium-leak current. The sequence is that of Protein unc-79 homolog (UNC79) from Homo sapiens (Human).